Reading from the N-terminus, the 649-residue chain is Threonine--tRNA ligase (649 aa).

The TGS domain maps to 1–63 (MSSIKITFPD…KEDGSIEIIT (63 aa)). The tract at residues 245–543 (DHRVIGNELD…LTEMYKGAFP (299 aa)) is catalytic. Positions 339, 390, and 520 each coordinate Zn(2+).

This sequence belongs to the class-II aminoacyl-tRNA synthetase family. As to quaternary structure, homodimer. Zn(2+) serves as cofactor.

The protein localises to the cytoplasm. The catalysed reaction is tRNA(Thr) + L-threonine + ATP = L-threonyl-tRNA(Thr) + AMP + diphosphate + H(+). Catalyzes the attachment of threonine to tRNA(Thr) in a two-step reaction: L-threonine is first activated by ATP to form Thr-AMP and then transferred to the acceptor end of tRNA(Thr). Also edits incorrectly charged L-seryl-tRNA(Thr). The sequence is that of Threonine--tRNA ligase from Ligilactobacillus salivarius (strain UCC118) (Lactobacillus salivarius).